The chain runs to 475 residues: MSPQTETRTGTGFKAGVKDYRLTYYTPDYVTKETDILAAFRMTPQPGVPPEEAGAAVAAESSTGTWTTVWTDGLTSLDRYKGRCYDIEPVAGEDNQYIAYVAYPLDLFEEGSVTNLFTSIVGNVFGFKALRALRLEDLRIPPAYVKTFQGPPHGIQVERDKLNKYGRPLLGCTIKPKLGLSAKNYGRAVYECLRGGLDFTKDDENVNSQPFMRWRDRFLFCAEAIYKAQAETGEIKGHYLNATAGTCEEMLKRAEYAKELGVPIVMHDYLTGGFTANTSLSHYCRDNGLLLHIHRAMHAVIDRQRNHGIHFRVLAKALRMSGGDHIHSGTVVGKLEGEREVTLGFVDLLRDDYIEKDRSRGIYFTQDWVSLPGVLPVASGGIHVWHMPALTEIFGDDSVLQFGGGTLGHPWGNAPGAVANRVALEACVQARNEGRDLAREGNNIIREAAKFSPELAAACEVWKEIKFEFETIDTL.

The propeptide occupies 1–2; sequence MS. An N-acetylproline modification is found at Pro-3. At Lys-14 the chain carries N6,N6,N6-trimethyllysine. Residues Asn-123 and Thr-173 each coordinate substrate. Catalysis depends on Lys-175, which acts as the Proton acceptor. Residue Lys-177 participates in substrate binding. Positions 201, 203, and 204 each coordinate Mg(2+). An N6-carboxylysine modification is found at Lys-201. Catalysis depends on His-294, which acts as the Proton acceptor. Residues Arg-295, His-327, and Ser-379 each coordinate substrate.

Belongs to the RuBisCO large chain family. Type I subfamily. Heterohexadecamer of 8 large chains and 8 small chains; disulfide-linked. The disulfide link is formed within the large subunit homodimers. It depends on Mg(2+) as a cofactor. In terms of processing, the disulfide bond which can form in the large chain dimeric partners within the hexadecamer appears to be associated with oxidative stress and protein turnover.

The protein localises to the plastid. Its subcellular location is the chloroplast. The catalysed reaction is 2 (2R)-3-phosphoglycerate + 2 H(+) = D-ribulose 1,5-bisphosphate + CO2 + H2O. The enzyme catalyses D-ribulose 1,5-bisphosphate + O2 = 2-phosphoglycolate + (2R)-3-phosphoglycerate + 2 H(+). In terms of biological role, ruBisCO catalyzes two reactions: the carboxylation of D-ribulose 1,5-bisphosphate, the primary event in carbon dioxide fixation, as well as the oxidative fragmentation of the pentose substrate in the photorespiration process. Both reactions occur simultaneously and in competition at the same active site. In Chlorokybus atmophyticus (Soil alga), this protein is Ribulose bisphosphate carboxylase large chain.